An 87-amino-acid polypeptide reads, in one-letter code: Small ribosomal subunit protein bS20 (87 aa).

This sequence belongs to the bacterial ribosomal protein bS20 family.

Its function is as follows. Binds directly to 16S ribosomal RNA. The sequence is that of Small ribosomal subunit protein bS20 from Lachnoclostridium phytofermentans (strain ATCC 700394 / DSM 18823 / ISDg) (Clostridium phytofermentans).